Here is a 78-residue protein sequence, read N- to C-terminus: Large ribosomal subunit protein bL28 (78 aa).

Belongs to the bacterial ribosomal protein bL28 family.

The protein is Large ribosomal subunit protein bL28 of Thermosynechococcus vestitus (strain NIES-2133 / IAM M-273 / BP-1).